The sequence spans 367 residues: MLAELHEELETIRERFANLRGHLDLAAKQAEIEQLEVRASDPELWNTPRVAQELMQRLTRLKEEVALWNDLDHRMTSLAELIELAEQEGDESLAADLAAELRAVQREVAQRELEILLSGPYDDRDAFLSIQAGMGGTDAQDWAAMLLRMYTRWAERRGYTVNLIDLSEGEEAGIKSATIEIRGPYAYGYARAEAGVHRLIRLSPFNAAHTRQTSFARVEVMPEVDDAPEVEIKPEDLRIDVFRSGGHGGQGVNTTDSAVRITHLPTGIVVTCQNERSQIQNRETALRVLRARLLERELQRQAEERARLRGEYREAAFGNQMRTYYLHPSTLVKDHRTDYETSNVQAVLDGEIDPFIEAFLRANVRES.

Residue Gln-250 is modified to N5-methylglutamine.

It belongs to the prokaryotic/mitochondrial release factor family. In terms of processing, methylated by PrmC. Methylation increases the termination efficiency of RF2.

It localises to the cytoplasm. Its function is as follows. Peptide chain release factor 2 directs the termination of translation in response to the peptide chain termination codons UGA and UAA. In Chloroflexus aggregans (strain MD-66 / DSM 9485), this protein is Peptide chain release factor 2.